The chain runs to 501 residues: Glycerol kinase (501 aa).

An ADP-binding site is contributed by threonine 14. ATP contacts are provided by threonine 14, threonine 15, and serine 16. Residue threonine 14 coordinates sn-glycerol 3-phosphate. Arginine 18 lines the ADP pocket. Residues arginine 84, glutamate 85, and tyrosine 136 each coordinate sn-glycerol 3-phosphate. Positions 84, 85, and 136 each coordinate glycerol. Histidine 231 carries the post-translational modification Phosphohistidine; by HPr. Aspartate 245 contacts sn-glycerol 3-phosphate. Glycerol-binding residues include aspartate 245 and glutamine 246. Threonine 267 and glycine 310 together coordinate ADP. Threonine 267, glycine 310, glutamine 314, and glycine 411 together coordinate ATP. ADP-binding residues include glycine 411 and asparagine 415.

The protein belongs to the FGGY kinase family. In terms of assembly, homotetramer and homodimer (in equilibrium). Post-translationally, the phosphoenolpyruvate-dependent sugar phosphotransferase system (PTS), including enzyme I, and histidine-containing protein (HPr) are required for the phosphorylation of His-231, which leads to the activation of the enzyme.

The catalysed reaction is glycerol + ATP = sn-glycerol 3-phosphate + ADP + H(+). The protein operates within polyol metabolism; glycerol degradation via glycerol kinase pathway; sn-glycerol 3-phosphate from glycerol: step 1/1. With respect to regulation, activated by phosphorylation and inhibited by fructose 1,6-bisphosphate (FBP). Its function is as follows. Key enzyme in the regulation of glycerol uptake and metabolism. Catalyzes the phosphorylation of glycerol to yield sn-glycerol 3-phosphate. The chain is Glycerol kinase from Enterococcus faecalis (strain ATCC 700802 / V583).